A 539-amino-acid chain; its full sequence is 2,3-dihydroxybenzoate-AMP ligase (539 aa).

G191 contributes to the ATP binding site. Substrate contacts are provided by residues 234 to 235 (HN) and S240. Residues G307, V329, D413, R428, and K519 each coordinate ATP. K519 contributes to the substrate binding site.

The protein belongs to the ATP-dependent AMP-binding enzyme family.

Its subcellular location is the cytoplasm. It catalyses the reaction 2,3-dihydroxybenzoate + holo-[ACP] + ATP = 2,3-dihydroxybenzoyl-[ACP] + AMP + diphosphate. It participates in siderophore biosynthesis; bacillibactin biosynthesis. Involved in the biosynthesis of the catecholic siderophore bacillibactin. Catalyzes the activation of the carboxylate group of 2,3-dihydroxy-benzoate (DHB), via ATP-dependent PPi exchange reactions, to the acyladenylate. The sequence is that of 2,3-dihydroxybenzoate-AMP ligase from Bacillus subtilis (strain 168).